The sequence spans 453 residues: Allantoinase (453 aa).

Residues H59, H61, K146, H186, H242, and D315 each coordinate Zn(2+). Residue K146 is modified to N6-carboxylysine.

Belongs to the metallo-dependent hydrolases superfamily. Allantoinase family. Homotetramer. Requires Zn(2+) as cofactor. Post-translationally, carboxylation allows a single lysine to coordinate two zinc ions.

The catalysed reaction is (S)-allantoin + H2O = allantoate + H(+). It participates in nitrogen metabolism; (S)-allantoin degradation; allantoate from (S)-allantoin: step 1/1. Its function is as follows. Catalyzes the conversion of allantoin (5-ureidohydantoin) to allantoic acid by hydrolytic cleavage of the five-member hydantoin ring. The chain is Allantoinase from Escherichia coli (strain K12 / MC4100 / BW2952).